Here is a 1063-residue protein sequence, read N- to C-terminus: JmjC domain-containing histone demethylation protein 1 (1063 aa).

A JmjC domain is found at 86–266 (LYNVLSLEYS…TQLRVYQVEN (181 aa)). Substrate is bound at residue Thr160. Fe cation contacts are provided by His163 and Asp165. Residue Lys180 participates in substrate binding. Fe cation is bound at residue His234. Over residues 379 to 389 (GLEEEAEDEDV) the composition is skewed to acidic residues. Disordered stretches follow at residues 379–400 (GLEE…AEER), 554–750 (ESDE…NPYN), and 776–1040 (VELH…KRAK). The span at 390 to 400 (KPETKKEAEER) shows a compositional bias: basic and acidic residues. Composition is skewed to acidic residues over residues 594–605 (PEYDEDMEEYDP) and 613–631 (ELEE…EEEY). Low complexity predominate over residues 636–646 (TRRSSTRGSAS). Composition is skewed to basic and acidic residues over residues 647–665 (TKEE…PKKE), 674–712 (EKSS…ELRA), 776–806 (VELH…HEDS), 813–835 (PYDR…DSHR), and 892–902 (EPRRSNDRRTS). Over residues 926-937 (AEAASASSSRHS) the composition is skewed to low complexity. Polar residues-rich tracts occupy residues 950 to 963 (LNSS…TPMY) and 973 to 982 (WLPNTSNVTR). Over residues 1005 to 1016 (PPFPRSITPPPV) the composition is skewed to pro residues. Positions 1020–1030 (ELKSQSNGRKS) are enriched in polar residues. Basic and acidic residues predominate over residues 1031–1040 (NYSEDGKRAK).

Belongs to the JHDM1 histone demethylase family. Requires Fe(2+) as cofactor.

The protein resides in the nucleus. It catalyses the reaction N(6),N(6)-dimethyl-L-lysyl(36)-[histone H3] + 2 2-oxoglutarate + 2 O2 = L-lysyl(36)-[histone H3] + 2 formaldehyde + 2 succinate + 2 CO2. Histone demethylase that specifically demethylates 'Lys-36' of histone H3, thereby playing a central role in histone code. The sequence is that of JmjC domain-containing histone demethylation protein 1 (jhdm-1) from Caenorhabditis briggsae.